Here is a 60-residue protein sequence, read N- to C-terminus: Large ribosomal subunit protein uL30 (60 aa).

It belongs to the universal ribosomal protein uL30 family. In terms of assembly, part of the 50S ribosomal subunit.

The sequence is that of Large ribosomal subunit protein uL30 from Syntrophomonas wolfei subsp. wolfei (strain DSM 2245B / Goettingen).